A 375-amino-acid chain; its full sequence is E3 ubiquitin-protein ligase IE2 (375 aa).

The span at Met1–Asn12 shows a compositional bias: polar residues. 2 disordered regions span residues Met1–Arg61 and Leu115–Ser142. Residues Cys177–Asn225 form an RING-type zinc finger. Positions Lys272–Gln348 form a coiled coil.

This sequence belongs to the alphabaculovirus IE2 protein family. Homooligomer. Post-translationally, auto-ubiquitinated.

It is found in the host nucleus. The catalysed reaction is S-ubiquitinyl-[E2 ubiquitin-conjugating enzyme]-L-cysteine + [acceptor protein]-L-lysine = [E2 ubiquitin-conjugating enzyme]-L-cysteine + N(6)-ubiquitinyl-[acceptor protein]-L-lysine.. RING-finger E3 ubiquitin ligase that plays an important regulatory role during the initial stages of infection. Migrates to specific nuclear foci early in infection supposely to prepare the sites for viral replication by targeting and ubiquitinating host proteins. This chain is E3 ubiquitin-protein ligase IE2 (IE2), found in Hyphantria cunea nuclear polyhedrosis virus (HcNPV).